The primary structure comprises 359 residues: Ribosomal RNA large subunit methyltransferase M (359 aa).

S-adenosyl-L-methionine contacts are provided by residues Ser186, 219–222 (CPGG), Asp238, Asp258, and Asp275. The active-site Proton acceptor is the Lys304.

Belongs to the class I-like SAM-binding methyltransferase superfamily. RNA methyltransferase RlmE family. RlmM subfamily. In terms of assembly, monomer.

Its subcellular location is the cytoplasm. The enzyme catalyses cytidine(2498) in 23S rRNA + S-adenosyl-L-methionine = 2'-O-methylcytidine(2498) in 23S rRNA + S-adenosyl-L-homocysteine + H(+). Its function is as follows. Catalyzes the 2'-O-methylation at nucleotide C2498 in 23S rRNA. The protein is Ribosomal RNA large subunit methyltransferase M of Aliivibrio fischeri (strain MJ11) (Vibrio fischeri).